We begin with the raw amino-acid sequence, 248 residues long: 23S rRNA (guanosine(2553)-2'-O)-methyltransferase RlmP (248 aa).

Arg123, Gly204, Val224, and Leu233 together coordinate S-adenosyl-L-methionine.

It belongs to the class IV-like SAM-binding methyltransferase superfamily. RNA methyltransferase TrmH family. Homodimer.

It localises to the cytoplasm. It catalyses the reaction guanosine(2553) in 23S rRNA + S-adenosyl-L-methionine = 2'-O-methylguanosine(2553) in 23S rRNA + S-adenosyl-L-homocysteine + H(+). Its function is as follows. Specifically methylates the ribose of guanosine 2553 (G2553) in 23S rRNA. When the target G2553 is mutated, is able to methylate the ribose of adenosine, but it cannot methylate cytidine nor uridine. Modifies free 23S rRNA but not the fully assembled ribosome nor the 50S subunit, suggesting that the modification occurs early during ribosome biogenesis. This chain is 23S rRNA (guanosine(2553)-2'-O)-methyltransferase RlmP, found in Bacillus subtilis (strain 168).